A 179-amino-acid polypeptide reads, in one-letter code: uncharacterized protein (179 aa).

Residues Ile139–Glu172 are a coiled coil.

This is an uncharacterized protein from Methanocaldococcus jannaschii (strain ATCC 43067 / DSM 2661 / JAL-1 / JCM 10045 / NBRC 100440) (Methanococcus jannaschii).